A 417-amino-acid polypeptide reads, in one-letter code: Lactose permease (417 aa).

An N-formylmethionine; partial modification is found at Met-1. At 1–7 (MYYLKNT) the chain is on the cytoplasmic side. The helical transmembrane segment at 8–34 (NFWMFGLFFFFYFFIMGAYFPFFPIWL) threads the bilayer. The Periplasmic segment spans residues 35-41 (HDINHIS). A helical membrane pass occupies residues 42–70 (KSDTGIIFAAISLFSLLFQPLFGLLSDKL). Residues 71 to 74 (GLRK) lie on the Cytoplasmic side of the membrane. The chain crosses the membrane as a helical span at residues 75 to 100 (YLLWIITGMLVMFAPFFIFIFGPLLQ). Residues 101-104 (YNIL) lie on the Periplasmic side of the membrane. The chain crosses the membrane as a helical span at residues 105-129 (VGSIVGGIYLGFCFNAGAPAVEAFI). The Cytoplasmic portion of the chain corresponds to 130 to 140 (EKVSRRSNFEF). Residues 141–163 (GRARMFGCVGWALCASIVGIMFT) traverse the membrane as a helical segment. At 164–166 (INN) the chain is on the periplasmic side. The chain crosses the membrane as a helical span at residues 167-186 (QFVFWLGSGCALILAVLLFF). Over 187-220 (AKTDAPSSATVANAVGANHSAFSLKLALELFRQP) the chain is Cytoplasmic. A helical transmembrane segment spans residues 221–249 (KLWFLSLYVIGVSCTYDVFDQQFANFFTS). Over 250–253 (FFAT) the chain is Periplasmic. The helical transmembrane segment at 254–278 (GEQGTRVFGYVTTMGELLNASIMFF) threads the bilayer. The Cytoplasmic portion of the chain corresponds to 279–288 (APLIINRIGG). A helical transmembrane segment spans residues 289–308 (KNALLLAGTIMSVRIIGSSF). At 309-311 (ATS) the chain is on the periplasmic side. A helical transmembrane segment spans residues 312-334 (ALEVVILKTLHMFEVPFLLVGCF). The Cytoplasmic segment spans residues 335–346 (KYITSQFEVRFS). Residues 347–374 (ATIYLVCFCFFKQLAMIFMSVLAGNMYE) form a helical membrane-spanning segment. At 375-377 (SIG) the chain is on the periplasmic side. Residues 378–398 (FQGAYLVLGLVALGFTLISVF) traverse the membrane as a helical segment. The Cytoplasmic portion of the chain corresponds to 399-417 (TLSGPGPLSLLRRQVNEVA).

Monomer.

It is found in the cell inner membrane. The enzyme catalyses lactose(in) + H(+)(in) = lactose(out) + H(+)(out). It catalyses the reaction melibiose(in) + H(+)(in) = melibiose(out) + H(+)(out). With respect to regulation, inhibited by the proton ionophore carbonyl cyanide m-chlorophenylhydrazone (CCCP). Functionally, responsible for transport of beta-galactosides into the cell, with the concomitant import of a proton (symport system). Can transport lactose, melibiose, the synthetic disaccharide lactulose or the analog methyl-1-thio-beta,D-galactopyranoside (TMG), but not sucrose or fructose. The substrate specificity is directed toward the galactopyranosyl moiety of the substrate. This is Lactose permease from Escherichia coli (strain K12).